A 348-amino-acid chain; its full sequence is MASPAIRLTQYSHGAGCGCKISPKVLDKILHTEQQKFFDPRLLVGNETRDDAAVYDIGNGVGIISTTDFFMPIVDDPFDFGRIAATNAISDVYAMGGKPIMAIAILGWPIDKLAPEIAQQVIEGGRYVCQQAGISLAGGHSIDAPEPIFGLAVTGIVSTEQVKKNSAAKPGCKLFLTKPLGIGILTTAEKKSKLRPEHRGLATETMCQLNKPGADFAHIPGVTAMTDVTGFGLLGHLSEICQGSGVQAILHYSAIPRLPAVEDYIAEGCVPGGTGRNFDSYGHLIGNMSDLQRQLLCDPQTSGGLLLAVLPDAEADVQAIAAQHGMTLSPIGELTSADSRRALIEIVV.

C17 is an active-site residue. Residues K20 and 48-50 (TRD) each bind ATP. D51 provides a ligand contact to Mg(2+). ATP contacts are provided by residues D68, D91, and 139 to 141 (GHS). Mg(2+) is bound at residue D91. D227 is a binding site for Mg(2+).

Belongs to the selenophosphate synthase 1 family. Class I subfamily. As to quaternary structure, homodimer. Mg(2+) serves as cofactor.

The catalysed reaction is hydrogenselenide + ATP + H2O = selenophosphate + AMP + phosphate + 2 H(+). In terms of biological role, synthesizes selenophosphate from selenide and ATP. The polypeptide is Selenide, water dikinase (Yersinia pseudotuberculosis serotype I (strain IP32953)).